A 405-amino-acid chain; its full sequence is Glucose-1-phosphate adenylyltransferase (405 aa).

Residues Tyr96, Gly161, 176–177, and Ser194 each bind alpha-D-glucose 1-phosphate; that span reads EK.

It belongs to the bacterial/plant glucose-1-phosphate adenylyltransferase family. As to quaternary structure, homotetramer.

It catalyses the reaction alpha-D-glucose 1-phosphate + ATP + H(+) = ADP-alpha-D-glucose + diphosphate. Its pathway is glycan biosynthesis; glycogen biosynthesis. In terms of biological role, involved in the biosynthesis of ADP-glucose, a building block required for the elongation reactions to produce glycogen. Catalyzes the reaction between ATP and alpha-D-glucose 1-phosphate (G1P) to produce pyrophosphate and ADP-Glc. The sequence is that of Glucose-1-phosphate adenylyltransferase from Photobacterium profundum (strain SS9).